Consider the following 251-residue polypeptide: LexA repressor (251 aa).

Positions Phe26–Lys46 form a DNA-binding region, H-T-H motif. Residues Ser172 and Lys210 each act as for autocatalytic cleavage activity in the active site.

The protein belongs to the peptidase S24 family. Homodimer.

It carries out the reaction Hydrolysis of Ala-|-Gly bond in repressor LexA.. Represses a number of genes involved in the response to DNA damage (SOS response), including recA and lexA. In the presence of single-stranded DNA, RecA interacts with LexA causing an autocatalytic cleavage which disrupts the DNA-binding part of LexA, leading to derepression of the SOS regulon and eventually DNA repair. This chain is LexA repressor, found in Rhodospirillum rubrum (strain ATCC 11170 / ATH 1.1.1 / DSM 467 / LMG 4362 / NCIMB 8255 / S1).